The following is a 189-amino-acid chain: GTP cyclohydrolase 1 (189 aa).

Residues C78, H81, and C150 each coordinate Zn(2+).

Belongs to the GTP cyclohydrolase I family. As to quaternary structure, homomer.

The enzyme catalyses GTP + H2O = 7,8-dihydroneopterin 3'-triphosphate + formate + H(+). Its pathway is cofactor biosynthesis; 7,8-dihydroneopterin triphosphate biosynthesis; 7,8-dihydroneopterin triphosphate from GTP: step 1/1. This is GTP cyclohydrolase 1 from Bacillus anthracis (strain A0248).